Here is a 444-residue protein sequence, read N- to C-terminus: Ribitol-5-phosphate xylosyltransferase 1 (444 aa).

Residues 1 to 9 are Cytoplasmic-facing; that stretch reads MRLTRTRLC. A helical; Signal-anchor for type II membrane protein membrane pass occupies residues 10–30; that stretch reads SLLVALYCLFSIYAAYHVFFG. At 31-444 the chain is on the extracellular side; sequence RRRRPLGTTS…ESSFFINNKV (414 aa). The tract at residues 38-79 is disordered; the sequence is TTSRNSRKAAAAQAKERRGREQSALESEEWNPWEGDEKNEQR. A compositionally biased stretch (basic and acidic residues) spans 51 to 60; it reads AKERRGREQS.

Belongs to the RXYLT1 family. In terms of assembly, forms a complex composed of FKTN/fukutin, FKRP and RXYLT1/TMEM5.

The protein localises to the golgi apparatus membrane. It catalyses the reaction 3-O-[Rib-ol-P-Rib-ol-P-3-beta-D-GalNAc-(1-&gt;3)-beta-D-GlcNAc-(1-&gt;4)-(O-6-P-alpha-D-Man)]-Thr-[protein] + UDP-alpha-D-xylose = 3-O-[beta-D-Xyl-(1-&gt;4)-Rib-ol-P-Rib-ol-P-3-beta-D-GalNAc-(1-&gt;3)-beta-D-GlcNAc-(1-&gt;4)-(O-6-P-alpha-D-Man)]-Thr-[protein] + UDP + H(+). The protein operates within protein modification; protein glycosylation. Acts as a UDP-D-xylose:ribitol-5-phosphate beta1,4-xylosyltransferase, which catalyzes the transfer of UDP-D-xylose to ribitol 5-phosphate (Rbo5P) to form the Xylbeta1-4Rbo5P linkage on O-mannosyl glycan. Participates in the biosynthesis of the phosphorylated O-mannosyl trisaccharide (N-acetylgalactosamine-beta-3-N-acetylglucosamine-beta-4-(phosphate-6-)mannose), a carbohydrate structure present in alpha-dystroglycan (DAG1), which is required for binding laminin G-like domain-containing extracellular proteins with high affinity. The polypeptide is Ribitol-5-phosphate xylosyltransferase 1 (Mus musculus (Mouse)).